The sequence spans 412 residues: MKTLDDLETQLGGFAGRRVLVRSDLNVPLDHDRRDGAGQPVITDDGRLRASVPTLRRLLDAGARVVVTAHLGRPKGAPEAKYSLAPVHARLAELLPGVEVGFCPVTVGAQATAAVDALADGELLLLENIRFNAGETSKDDEEREAFADELAALADAFVSDGFGAVHRKHASVYDVALRLPHAAGGLVATEVEVLQRLTAHPERPYAVVLGGSKVSDKLGVIDNLLGSLLGEGDRLLVGGGMVFTFLKAQGYEVGKSLLETDQLDRVAGYVRTAREKGVELVLPTDVVAATAFAADAEHDVVAVDAIPADRLGLDIGPDSGAAFAARLADARTVFWNGPMGVFEMEPYSHGTRAVAQALVDGGAFSVVGGGDSAAAVRTLGFADERFGHISTGGGASLEYLEGKHLPGLDVLS.

Substrate contacts are provided by residues 24–26 (DLN), arginine 47, 70–73 (HLGR), arginine 130, and arginine 167. ATP is bound by residues lysine 217, glycine 312, glutamate 343, and 369–372 (GGDS).

This sequence belongs to the phosphoglycerate kinase family. As to quaternary structure, monomer.

The protein localises to the cytoplasm. It carries out the reaction (2R)-3-phosphoglycerate + ATP = (2R)-3-phospho-glyceroyl phosphate + ADP. It functions in the pathway carbohydrate degradation; glycolysis; pyruvate from D-glyceraldehyde 3-phosphate: step 2/5. The sequence is that of Phosphoglycerate kinase from Kineococcus radiotolerans (strain ATCC BAA-149 / DSM 14245 / SRS30216).